A 595-amino-acid chain; its full sequence is Putative laccase-18 (595 aa).

The first 29 residues, 1–29 (MEKLSTAASLFGVVVAATALAMAVVGGEA), serve as a signal peptide directing secretion. 2 consecutive Plastocyanin-like domains span residues 37-153 (MVHE…PRDG) and 162-316 (KDVP…YTGA). N-linked (GlcNAc...) asparagine glycosylation is found at Asn42 and Asn48. The Cu cation site is built by His87 and His89. N-linked (GlcNAc...) asparagine glycosylation is present at Asn121. Positions 132 and 134 each coordinate Cu cation. N-linked (GlcNAc...) asparagine glycans are attached at residues Asn206, Asn345, Asn382, Asn402, Asn409, Asn439, and Asn470. Residues 429-571 (DFPVRPPRPF…ATAFIVEDGP (143 aa)) enclose the Plastocyanin-like 3 domain. Cu cation-binding residues include Asn488, His491, His493, His550, Cys551, His552, His556, and Met561. The interval 570–595 (GPTPETSLPPPPPEFKRCGTNGLSQP) is disordered.

It belongs to the multicopper oxidase family. Requires Cu cation as cofactor.

The protein resides in the secreted. It localises to the extracellular space. Its subcellular location is the apoplast. The enzyme catalyses 4 hydroquinone + O2 = 4 benzosemiquinone + 2 H2O. In terms of biological role, lignin degradation and detoxification of lignin-derived products. The chain is Putative laccase-18 (LAC18) from Oryza sativa subsp. indica (Rice).